Here is a 223-residue protein sequence, read N- to C-terminus: Transcriptional regulator HMO1 (223 aa).

2 disordered regions span residues isoleucine 69–lysine 89 and aspartate 165–proline 223. A compositionally biased stretch (basic and acidic residues) spans glutamate 70–alanine 86. The HMG box DNA-binding region spans proline 87 to glutamate 160. Over residues lysine 204–proline 223 the composition is skewed to basic residues.

It is found in the nucleus. Functionally, transcription factor that binds upstream of hexose and ergosterol metabolism, as well as cell cycle genes. Activates pseudohyphal growth. This Candida albicans (strain SC5314 / ATCC MYA-2876) (Yeast) protein is Transcriptional regulator HMO1 (HMO1).